Reading from the N-terminus, the 444-residue chain is Methylenetetrahydrofolate--tRNA-(uracil-5-)-methyltransferase TrmFO (444 aa).

Position 10-15 (10-15 (GAGLAG)) interacts with FAD.

It belongs to the MnmG family. TrmFO subfamily. It depends on FAD as a cofactor.

The protein localises to the cytoplasm. It catalyses the reaction uridine(54) in tRNA + (6R)-5,10-methylene-5,6,7,8-tetrahydrofolate + NADH + H(+) = 5-methyluridine(54) in tRNA + (6S)-5,6,7,8-tetrahydrofolate + NAD(+). The catalysed reaction is uridine(54) in tRNA + (6R)-5,10-methylene-5,6,7,8-tetrahydrofolate + NADPH + H(+) = 5-methyluridine(54) in tRNA + (6S)-5,6,7,8-tetrahydrofolate + NADP(+). Its function is as follows. Catalyzes the folate-dependent formation of 5-methyl-uridine at position 54 (M-5-U54) in all tRNAs. The chain is Methylenetetrahydrofolate--tRNA-(uracil-5-)-methyltransferase TrmFO from Streptococcus pneumoniae (strain Taiwan19F-14).